A 913-amino-acid chain; its full sequence is Sterol uptake control protein 2 (913 aa).

Residues 50–80 constitute a DNA-binding region (zn(2)-C6 fungal-type); the sequence is GCDNCKRRRVKCDEGKPACRKCTNMKLECQY. Disordered stretches follow at residues 103–173 and 216–258; these read GSVE…SMGL and GNMG…LAGS. Position 122 is a phosphothreonine (T122). The segment covering 150 to 164 has biased composition (basic and acidic residues); it reads SESEEKSSAPIEDKN. Positions 222 to 241 are enriched in low complexity; sequence QLQQQQQVQQQSQPQTQAQQ. Residues 303–346 are a coiled coil; it reads QQHQQVQLQQYQQLRQEQHQQVQQQQQEQLQQYQQHFLQQQQQV. Disordered regions lie at residues 347-385 and 453-489; these read LLQQEQQPNDEEGGVQEENSKKVKEGPLQSQTSETTLNS and MQEHHERAAASVKENDGQLSDTKSPAPSNNAQGGSAS. A compositionally biased stretch (polar residues) spans 374–385; the sequence is LQSQTSETTLNS. A coiled-coil region spans residues 440–472; the sequence is ATKASNAEEALANMQEHHERAAASVKENDGQLS. The segment covering 454-468 has biased composition (basic and acidic residues); it reads QEHHERAAASVKEND. The segment covering 469–487 has biased composition (polar residues); sequence GQLSDTKSPAPSNNAQGGS. S519 bears the Phosphoserine mark. Over residues 552 to 562 the composition is skewed to polar residues; it reads EPTISLQTSQT. The interval 552-571 is disordered; it reads EPTISLQTSQTENEDDASRQ.

It is found in the nucleus. In terms of biological role, transcription factor that is involved in activation of anaerobic genes such as DAN/TIR cell wall mannoprotein genes and YML083c. Appears to bind to anaerobic response elements (AR1) with the consensus sequence 5'-TCGTTYAG-3' present in the promoter regions of DAN/TIR genes. Involved in sterol uptake and regulation of the sterol biosynthesis. Binds to sterol regulatory elements (SRE) with the consensus sequence 5'-TCGTATA-3' present in ERG2 and ERG3 promoters. May be involved in down-regulation of CWP2 during anaerobic adaptation. The protein is Sterol uptake control protein 2 (UPC2) of Saccharomyces cerevisiae (strain ATCC 204508 / S288c) (Baker's yeast).